Here is a 63-residue protein sequence, read N- to C-terminus: Large ribosomal subunit protein uL29 (63 aa).

The protein belongs to the universal ribosomal protein uL29 family.

The chain is Large ribosomal subunit protein uL29 from Vibrio parahaemolyticus serotype O3:K6 (strain RIMD 2210633).